Reading from the N-terminus, the 246-residue chain is MARKLAAGNWKMNGTGEHLAELENLAQGDLPEGVDVLICPPATLISRAADRAGDIAIGGQDCHAKTSGAHTGDLSADMLRDAGATYVIIGHSERRADHGEGDADVRAKTEAAQAAGLVAVVCIGETLEEREAGTTLEVVGAQLAGSLPDGVTAENTVVAYEPVWAIGTGKVPTLDQIAEVHDALRADLVARFGAAGKDLPLLYGGSVKPGNAAEIFGVSNVDGALVGGASLKAADFGPIIAALAAS.

9–11 (NWK) provides a ligand contact to substrate. His-91 functions as the Electrophile in the catalytic mechanism. Residue Glu-161 is the Proton acceptor of the active site. Substrate contacts are provided by residues Gly-167, Ser-206, and 227-228 (GG).

Belongs to the triosephosphate isomerase family. Homodimer.

The protein resides in the cytoplasm. The enzyme catalyses D-glyceraldehyde 3-phosphate = dihydroxyacetone phosphate. The protein operates within carbohydrate biosynthesis; gluconeogenesis. It participates in carbohydrate degradation; glycolysis; D-glyceraldehyde 3-phosphate from glycerone phosphate: step 1/1. In terms of biological role, involved in the gluconeogenesis. Catalyzes stereospecifically the conversion of dihydroxyacetone phosphate (DHAP) to D-glyceraldehyde-3-phosphate (G3P). The protein is Triosephosphate isomerase of Ruegeria sp. (strain TM1040) (Silicibacter sp.).